A 113-amino-acid chain; its full sequence is Hydrogenase maturation factor HypA (113 aa).

Position 2 (His2) interacts with Ni(2+). Zn(2+) is bound by residues Cys73, Cys76, Cys89, and Cys92.

This sequence belongs to the HypA/HybF family.

In terms of biological role, involved in the maturation of [NiFe] hydrogenases. Required for nickel insertion into the metal center of the hydrogenase. This is Hydrogenase maturation factor HypA from Beijerinckia indica subsp. indica (strain ATCC 9039 / DSM 1715 / NCIMB 8712).